The primary structure comprises 185 residues: Protein GrpE (185 aa).

The protein belongs to the GrpE family. In terms of assembly, homodimer.

Its subcellular location is the cytoplasm. Functionally, participates actively in the response to hyperosmotic and heat shock by preventing the aggregation of stress-denatured proteins, in association with DnaK and GrpE. It is the nucleotide exchange factor for DnaK and may function as a thermosensor. Unfolded proteins bind initially to DnaJ; upon interaction with the DnaJ-bound protein, DnaK hydrolyzes its bound ATP, resulting in the formation of a stable complex. GrpE releases ADP from DnaK; ATP binding to DnaK triggers the release of the substrate protein, thus completing the reaction cycle. Several rounds of ATP-dependent interactions between DnaJ, DnaK and GrpE are required for fully efficient folding. This Methanobrevibacter smithii (strain ATCC 35061 / DSM 861 / OCM 144 / PS) protein is Protein GrpE.